The following is a 473-amino-acid chain: tRNA-2-methylthio-N(6)-dimethylallyladenosine synthase (473 aa).

Residues 5–125 (RKLHIKSYGC…LPQLLARAKA (121 aa)) form the MTTase N-terminal domain. The [4Fe-4S] cluster site is built by Cys14, Cys50, Cys88, Cys166, Cys170, and Cys173. The region spanning 152–384 (RARGISAFVT…QNLIDSQQSA (233 aa)) is the Radical SAM core domain. Positions 387 to 449 (RAAVGTTVDV…RYSLLGSLAS (63 aa)) constitute a TRAM domain. Over residues 453–462 (SRASADDAPP) the composition is skewed to low complexity. The segment at 453–473 (SRASADDAPPVGASSPAIMGV) is disordered.

The protein belongs to the methylthiotransferase family. MiaB subfamily. As to quaternary structure, monomer. [4Fe-4S] cluster serves as cofactor.

Its subcellular location is the cytoplasm. It carries out the reaction N(6)-dimethylallyladenosine(37) in tRNA + (sulfur carrier)-SH + AH2 + 2 S-adenosyl-L-methionine = 2-methylsulfanyl-N(6)-dimethylallyladenosine(37) in tRNA + (sulfur carrier)-H + 5'-deoxyadenosine + L-methionine + A + S-adenosyl-L-homocysteine + 2 H(+). Its function is as follows. Catalyzes the methylthiolation of N6-(dimethylallyl)adenosine (i(6)A), leading to the formation of 2-methylthio-N6-(dimethylallyl)adenosine (ms(2)i(6)A) at position 37 in tRNAs that read codons beginning with uridine. This Nitrobacter hamburgensis (strain DSM 10229 / NCIMB 13809 / X14) protein is tRNA-2-methylthio-N(6)-dimethylallyladenosine synthase.